The primary structure comprises 517 residues: Xaa-Pro dipeptidase (517 aa).

Mn(2+) contacts are provided by D244, D255, H336, E381, and E420.

Belongs to the peptidase M24B family. Bacterial-type prolidase subfamily. As to quaternary structure, monomer. Mn(2+) serves as cofactor.

It catalyses the reaction Xaa-L-Pro dipeptide + H2O = an L-alpha-amino acid + L-proline. The catalysed reaction is diisopropyl fluorophosphate + H2O = diisopropyl phosphate + fluoride + 2 H(+). It carries out the reaction An aryl dialkyl phosphate + H2O = dialkyl phosphate + an aryl alcohol.. In terms of biological role, splits dipeptides with a prolyl or hydroxyprolyl residue in the C-terminal position and a nonpolar amino acid at the N-terminal position. Also catalyzes the hydrolysis of toxic organophosphorus cholinesterase-inhibiting compounds including insecticide paraoxon and nerve gases such as diisopropylfluorophosphate (DFP), O-isopropyl methylphosphonofluoridate (sarin), O-pinacolyl methylphosphonofluoridate (soman), and O-cyclohexyl methylphosphonofluoridate. The polypeptide is Xaa-Pro dipeptidase (pepQ) (Alteromonas sp).